We begin with the raw amino-acid sequence, 585 residues long: Adenine deaminase (585 aa).

Belongs to the metallo-dependent hydrolases superfamily. Adenine deaminase family. The cofactor is Mn(2+).

It catalyses the reaction adenine + H2O + H(+) = hypoxanthine + NH4(+). The chain is Adenine deaminase from Halalkalibacterium halodurans (strain ATCC BAA-125 / DSM 18197 / FERM 7344 / JCM 9153 / C-125) (Bacillus halodurans).